Consider the following 320-residue polypeptide: Aspartate carbamoyltransferase catalytic subunit (320 aa).

Arginine 70 and threonine 71 together coordinate carbamoyl phosphate. L-aspartate is bound at residue lysine 98. Carbamoyl phosphate-binding residues include arginine 120, histidine 150, and glutamine 153. L-aspartate is bound by residues arginine 184 and arginine 239. Glycine 280 and proline 281 together coordinate carbamoyl phosphate.

This sequence belongs to the aspartate/ornithine carbamoyltransferase superfamily. ATCase family. In terms of assembly, heterododecamer (2C3:3R2) of six catalytic PyrB chains organized as two trimers (C3), and six regulatory PyrI chains organized as three dimers (R2).

The enzyme catalyses carbamoyl phosphate + L-aspartate = N-carbamoyl-L-aspartate + phosphate + H(+). It functions in the pathway pyrimidine metabolism; UMP biosynthesis via de novo pathway; (S)-dihydroorotate from bicarbonate: step 2/3. Catalyzes the condensation of carbamoyl phosphate and aspartate to form carbamoyl aspartate and inorganic phosphate, the committed step in the de novo pyrimidine nucleotide biosynthesis pathway. The protein is Aspartate carbamoyltransferase catalytic subunit of Xylella fastidiosa (strain Temecula1 / ATCC 700964).